The chain runs to 380 residues: Cytochrome b (380 aa).

Helical transmembrane passes span 34–54 (FGSL…LLAA), 78–99 (WLIR…YLHI), 114–134 (WNTG…GYVL), and 179–199 (FFTL…IHLT). Heme b-binding residues include His-84 and His-98. Heme b-binding residues include His-183 and His-197. Residue His-202 coordinates a ubiquinone. The next 4 helical transmembrane spans lie at 227 to 247 (LKDI…ALFS), 289 to 309 (LGGV…PLLH), 321 to 341 (FSQL…WVGS), and 348 to 368 (FIII…ILFP).

Belongs to the cytochrome b family. In terms of assembly, the cytochrome bc1 complex contains 11 subunits: 3 respiratory subunits (MT-CYB, CYC1 and UQCRFS1), 2 core proteins (UQCRC1 and UQCRC2) and 6 low-molecular weight proteins (UQCRH/QCR6, UQCRB/QCR7, UQCRQ/QCR8, UQCR10/QCR9, UQCR11/QCR10 and a cleavage product of UQCRFS1). This cytochrome bc1 complex then forms a dimer. It depends on heme b as a cofactor.

The protein resides in the mitochondrion inner membrane. Component of the ubiquinol-cytochrome c reductase complex (complex III or cytochrome b-c1 complex) that is part of the mitochondrial respiratory chain. The b-c1 complex mediates electron transfer from ubiquinol to cytochrome c. Contributes to the generation of a proton gradient across the mitochondrial membrane that is then used for ATP synthesis. The sequence is that of Cytochrome b (MT-CYB) from Antigone rubicunda (Brolga crane).